We begin with the raw amino-acid sequence, 1515 residues long: Apolipophorin (1515 aa).

Positions 952–1118 (LRGVVVNGQH…NSYRLASSCP (167 aa)) constitute a VWFD domain. Cys-976 and Cys-1117 are joined by a disulfide. A glycan (N-linked (GlcNAc...) asparagine) is linked at Asn-988.

In terms of tissue distribution, hemolymph.

It is found in the secreted. Mediates transport for various types of lipids in hemolymph. Acts by forming lipoprotein particles that bind lipoproteins and lipids. Binds the A.niger cell wall component alpha-1,3-glucan, a fungal pathogen-associated molecular pattern (PAMP) that activates the host immune response. This is Apolipophorin from Galleria mellonella (Greater wax moth).